The sequence spans 583 residues: Potassium-transporting ATPase potassium-binding subunit (583 aa).

The next 10 membrane-spanning stretches (helical) occupy residues 3–23 (NIIW…WPLG), 66–86 (MACV…LLMA), 135–155 (GLTV…FALI), 177–197 (VLYI…EQGV), 266–286 (LEML…GAKI), 293–313 (VAIF…TVQA), 402–422 (GLYG…LMVG), 440–460 (AVVV…LMCL), 506–526 (VLLG…ILAM), and 549–569 (LFIF…FFPA).

This sequence belongs to the KdpA family. In terms of assembly, the system is composed of three essential subunits: KdpA, KdpB and KdpC.

Its subcellular location is the cell inner membrane. Part of the high-affinity ATP-driven potassium transport (or Kdp) system, which catalyzes the hydrolysis of ATP coupled with the electrogenic transport of potassium into the cytoplasm. This subunit binds the periplasmic potassium ions and delivers the ions to the membrane domain of KdpB through an intramembrane tunnel. In Desulfovibrio desulfuricans (strain ATCC 27774 / DSM 6949 / MB), this protein is Potassium-transporting ATPase potassium-binding subunit.